The chain runs to 171 residues: Small ribosomal subunit protein uS5 (171 aa).

The S5 DRBM domain maps to L16 to V79.

It belongs to the universal ribosomal protein uS5 family. Part of the 30S ribosomal subunit. Contacts proteins S4 and S8.

With S4 and S12 plays an important role in translational accuracy. In terms of biological role, located at the back of the 30S subunit body where it stabilizes the conformation of the head with respect to the body. The polypeptide is Small ribosomal subunit protein uS5 (Psychrobacter arcticus (strain DSM 17307 / VKM B-2377 / 273-4)).